Here is a 299-residue protein sequence, read N- to C-terminus: ATP phosphoribosyltransferase (299 aa).

The protein belongs to the ATP phosphoribosyltransferase family. Long subfamily. Mg(2+) is required as a cofactor.

The protein localises to the cytoplasm. It carries out the reaction 1-(5-phospho-beta-D-ribosyl)-ATP + diphosphate = 5-phospho-alpha-D-ribose 1-diphosphate + ATP. Its pathway is amino-acid biosynthesis; L-histidine biosynthesis; L-histidine from 5-phospho-alpha-D-ribose 1-diphosphate: step 1/9. With respect to regulation, feedback inhibited by histidine. In terms of biological role, catalyzes the condensation of ATP and 5-phosphoribose 1-diphosphate to form N'-(5'-phosphoribosyl)-ATP (PR-ATP). Has a crucial role in the pathway because the rate of histidine biosynthesis seems to be controlled primarily by regulation of HisG enzymatic activity. This is ATP phosphoribosyltransferase from Shewanella sp. (strain MR-7).